We begin with the raw amino-acid sequence, 88 residues long: DNA-directed RNA polymerase subunit omega (88 aa).

This sequence belongs to the RNA polymerase subunit omega family. The RNAP catalytic core consists of 2 alpha, 1 beta, 1 beta' and 1 omega subunit. When a sigma factor is associated with the core the holoenzyme is formed, which can initiate transcription.

It catalyses the reaction RNA(n) + a ribonucleoside 5'-triphosphate = RNA(n+1) + diphosphate. Promotes RNA polymerase assembly. Latches the N- and C-terminal regions of the beta' subunit thereby facilitating its interaction with the beta and alpha subunits. The polypeptide is DNA-directed RNA polymerase subunit omega (Anaeromyxobacter sp. (strain Fw109-5)).